The chain runs to 275 residues: Orotidine 5'-phosphate decarboxylase (275 aa).

Lysine 95 acts as the Proton donor in catalysis.

The protein belongs to the OMP decarboxylase family. Type 2 subfamily.

The enzyme catalyses orotidine 5'-phosphate + H(+) = UMP + CO2. Its pathway is pyrimidine metabolism; UMP biosynthesis via de novo pathway; UMP from orotate: step 2/2. This is Orotidine 5'-phosphate decarboxylase from Delftia acidovorans (strain DSM 14801 / SPH-1).